A 44-amino-acid polypeptide reads, in one-letter code: Photosystem I reaction center subunit IX (44 aa).

The helical transmembrane segment at 7–27 (YLSVAPVLSTLSLGFLTGFLI) threads the bilayer.

The protein belongs to the PsaJ family.

It localises to the plastid membrane. Functionally, may help in the organization of the PsaE and PsaF subunits. The protein is Photosystem I reaction center subunit IX of Cuscuta gronovii (Common dodder).